A 516-amino-acid polypeptide reads, in one-letter code: Cytochrome P450 1A2 (516 aa).

The O-linked (GlcNAc) serine glycan is linked to Ser-69. Residue Phe-226 coordinates substrate. Cys-458 lines the heme pocket.

Belongs to the cytochrome P450 family. In terms of assembly, interacts with PGRMC1; the interaction requires PGRMC1 homodimerization. It depends on heme as a cofactor.

Its subcellular location is the endoplasmic reticulum membrane. The protein resides in the microsome membrane. It catalyses the reaction an organic molecule + reduced [NADPH--hemoprotein reductase] + O2 = an alcohol + oxidized [NADPH--hemoprotein reductase] + H2O + H(+). The enzyme catalyses 17beta-estradiol + reduced [NADPH--hemoprotein reductase] + O2 = 2-hydroxy-17beta-estradiol + oxidized [NADPH--hemoprotein reductase] + H2O + H(+). It carries out the reaction 17beta-estradiol + reduced [NADPH--hemoprotein reductase] + O2 = 4-hydroxy-17beta-estradiol + oxidized [NADPH--hemoprotein reductase] + H2O + H(+). The catalysed reaction is estrone + reduced [NADPH--hemoprotein reductase] + O2 = 2-hydroxyestrone + oxidized [NADPH--hemoprotein reductase] + H2O + H(+). It catalyses the reaction estrone + reduced [NADPH--hemoprotein reductase] + O2 = 4-hydroxyestrone + oxidized [NADPH--hemoprotein reductase] + H2O + H(+). The enzyme catalyses cholesterol + reduced [NADPH--hemoprotein reductase] + O2 = 25-hydroxycholesterol + oxidized [NADPH--hemoprotein reductase] + H2O + H(+). It carries out the reaction all-trans-retinol + reduced [NADPH--hemoprotein reductase] + O2 = all-trans-retinal + oxidized [NADPH--hemoprotein reductase] + 2 H2O + H(+). The catalysed reaction is all-trans-retinal + reduced [NADPH--hemoprotein reductase] + O2 = all-trans-retinoate + oxidized [NADPH--hemoprotein reductase] + H2O + 2 H(+). It catalyses the reaction (5Z,8Z,11Z,14Z)-eicosatetraenoate + reduced [NADPH--hemoprotein reductase] + O2 = (14R,15S)-epoxy-(5Z,8Z,11Z)-eicosatrienoate + oxidized [NADPH--hemoprotein reductase] + H2O + H(+). The enzyme catalyses (5Z,8Z,11Z,14Z)-eicosatetraenoate + reduced [NADPH--hemoprotein reductase] + O2 = (14S,15R)-epoxy-(5Z,8Z,11Z)-eicosatrienoate + oxidized [NADPH--hemoprotein reductase] + H2O + H(+). It carries out the reaction (5Z,8Z,11Z,14Z,17Z)-eicosapentaenoate + reduced [NADPH--hemoprotein reductase] + O2 = (17R,18S)-epoxy-(5Z,8Z,11Z,14Z)-eicosatetraenoate + oxidized [NADPH--hemoprotein reductase] + H2O + H(+). The catalysed reaction is (4Z,7Z,10Z,13Z,16Z,19Z)-docosahexaenoate + reduced [NADPH--hemoprotein reductase] + O2 = (19R,20S)-epoxy-(4Z,7Z,10Z,13Z,16Z)-docosapentaenoate + oxidized [NADPH--hemoprotein reductase] + H2O + H(+). It catalyses the reaction (5S)-hydroperoxy-(6E,8Z,11Z,14Z)-eicosatetraenoate = 5-oxo-(6E,8Z,11Z,14Z)-eicosatetraenoate + H2O. The enzyme catalyses (12S)-hydroperoxy-(5Z,8Z,10E,14Z)-eicosatetraenoate = 12-oxo-(5Z,8Z,10E,14Z)-eicosatetraenoate + H2O. It carries out the reaction (15S)-hydroperoxy-(5Z,8Z,11Z,13E)-eicosatetraenoate = 15-oxo-(5Z,8Z,11Z,13E)-eicosatetraenoate + H2O. The catalysed reaction is (13S)-hydroperoxy-(9Z,11E)-octadecadienoate = 13-oxo-(9Z,11E)-octadecadienoate + H2O. It catalyses the reaction (5Z,8Z,11Z,14Z)-eicosatetraenoate + reduced [NADPH--hemoprotein reductase] + O2 = 13-hydroxy-(5Z,8Z,11Z,14Z)-eicosatetraenoate + oxidized [NADPH--hemoprotein reductase] + H2O + H(+). The enzyme catalyses (5Z,8Z,11Z,14Z)-eicosatetraenoate + reduced [NADPH--hemoprotein reductase] + O2 = 19-hydroxy-(5Z,8Z,11Z,14Z)-eicosatetraenoate + oxidized [NADPH--hemoprotein reductase] + H2O + H(+). It carries out the reaction (9Z,12Z)-octadecadienoate + reduced [NADPH--hemoprotein reductase] + O2 = 11-hydroxy-(9Z,12Z)-octadecadienoate + oxidized [NADPH--hemoprotein reductase] + H2O + H(+). The protein operates within cofactor metabolism; retinol metabolism. It functions in the pathway steroid metabolism; cholesterol metabolism. Its pathway is lipid metabolism; arachidonate metabolism. Its function is as follows. A cytochrome P450 monooxygenase involved in the metabolism of various endogenous substrates, including fatty acids, steroid hormones and vitamins. Mechanistically, uses molecular oxygen inserting one oxygen atom into a substrate, and reducing the second into a water molecule, with two electrons provided by NADPH via cytochrome P450 reductase (NADPH--hemoprotein reductase). Catalyzes the hydroxylation of carbon-hydrogen bonds. Exhibits high catalytic activity for the formation of hydroxyestrogens from estrone (E1) and 17beta-estradiol (E2), namely 2-hydroxy E1 and E2. Metabolizes cholesterol toward 25-hydroxycholesterol, a physiological regulator of cellular cholesterol homeostasis. May act as a major enzyme for all-trans retinoic acid biosynthesis in the liver. Catalyzes two successive oxidative transformation of all-trans retinol to all-trans retinal and then to the active form all-trans retinoic acid. Primarily catalyzes stereoselective epoxidation of the last double bond of polyunsaturated fatty acids (PUFA), displaying a strong preference for the (R,S) stereoisomer. Catalyzes bisallylic hydroxylation and omega-1 hydroxylation of PUFA. May also participate in eicosanoids metabolism by converting hydroperoxide species into oxo metabolites (lipoxygenase-like reaction, NADPH-independent). Plays a role in the oxidative metabolism of xenobiotics. Catalyzes the N-hydroxylation of heterocyclic amines and the O-deethylation of phenacetin. Metabolizes caffeine via N3-demethylation. This is Cytochrome P450 1A2 (CYP1A2) from Pongo abelii (Sumatran orangutan).